The following is a 347-amino-acid chain: NADH-ubiquinone oxidoreductase chain 2 (347 aa).

A run of 9 helical transmembrane segments spans residues 5–22, 26–45, 60–80, 150–170, 178–198, 200–220, 242–262, 274–294, and 324–344; these read ILTI…MVLI, WLTV…PILM, FLTQ…NLLL, NPNL…WGGL, ILAY…TYNP, LMML…MLFM, SLIL…GFIP, NMII…YFYM, and TLLP…PMML.

The protein belongs to the complex I subunit 2 family. As to quaternary structure, core subunit of respiratory chain NADH dehydrogenase (Complex I) which is composed of 45 different subunits. Interacts with TMEM242.

The protein resides in the mitochondrion inner membrane. It catalyses the reaction a ubiquinone + NADH + 5 H(+)(in) = a ubiquinol + NAD(+) + 4 H(+)(out). Its function is as follows. Core subunit of the mitochondrial membrane respiratory chain NADH dehydrogenase (Complex I) which catalyzes electron transfer from NADH through the respiratory chain, using ubiquinone as an electron acceptor. Essential for the catalytic activity and assembly of complex I. This chain is NADH-ubiquinone oxidoreductase chain 2, found in Martes flavigula (Yellow-throated marten).